The sequence spans 285 residues: MARTASTILFLLCLVLITGYTMARQEHCNLPLEKGKCGGRFERFYYNSHKGKCESFFYGGCSGNDNNFENEEECDKACGAFMTMADANSFCNLPAVVGRCKGYFPRYFYNTEAGKCQRFIYGGCGGNRNNFETVXDCRATCHPREKRALADMTMADANSFCQLPAVVGRCRGRFPRYYYNTEAGKCQRFIYGGCXGNRNNFETVEDCRATCHPREKRALADMTMADANSFCQLPAVVGKCRGYFPRYYYNTEAGKCQQFIYGGCGGNRNNFETVEDCRATCHSHA.

Residues 1 to 23 (MARTASTILFLLCLVLITGYTMA) form the signal peptide. Residues 24 to 87 (RQEHCNLPLE…CGAFMTMADA (64 aa)) constitute a propeptide that is removed on maturation. BPTI/Kunitz inhibitor domains lie at 28–78 (CNLP…DKAC), 91–141 (CNLP…RATC), 161–211 (CQLP…RATC), and 231–281 (CQLP…RATC). 12 cysteine pairs are disulfide-bonded: Cys-28–Cys-78, Cys-37–Cys-61, Cys-53–Cys-74, Cys-91–Cys-141, Cys-100–Cys-124, Cys-116–Cys-137, Cys-161–Cys-211, Cys-170–Cys-194, Cys-186–Cys-207, Cys-231–Cys-281, Cys-240–Cys-264, and Cys-256–Cys-277. Positions 146 to 225 (KRALADMTMA…KRALADMTMA (80 aa)) are excised as a propeptide.

It belongs to the venom Kunitz-type family. Sea anemone type 2 potassium channel toxin subfamily. In terms of tissue distribution, mostly expressed in the mesenterial filaments, with relatively low levels (3-4 fold) of expression in the acrorhagi. Expression levels in tentacles are detectable, but very low.

The protein localises to the secreted. It is found in the nematocyst. Functionally, may be involved in regulating functions and processes within the digestive system. Shows serine protease inhibitory activities. Strongly inhibits trypsin (Ki=0.05 nM), chymotrypsin (Ki=7.4 nM), and kallikreins (KLK5, KLK7 and KLK14). In terms of biological role, may be involved in regulating functions and processes within the digestive system. Shows serine protease inhibitory activities. Strongly inhibits trypsin (Ki=0.08 nM), chymotrypsin (Ki=2.9 nM), and kallikreins (KLK5, KLK7 and KLK14). This is Actinia tenebrosa protease inhibitors from Actinia tenebrosa (Australian red waratah sea anemone).